A 217-amino-acid polypeptide reads, in one-letter code: Probable cutinase 3 (217 aa).

Residues 1-17 (MSLRSLFVAGLATLALA) form the signal peptide. Intrachain disulfides connect Cys-39–Cys-118 and Cys-65–Cys-79. The active-site Nucleophile is the Ser-129. A disulfide bridge connects residues Cys-180 and Cys-187. Asp-184 is an active-site residue. The active-site Proton donor/acceptor is His-197.

This sequence belongs to the cutinase family.

Its subcellular location is the secreted. It carries out the reaction cutin + H2O = cutin monomers.. In terms of biological role, catalyzes the hydrolysis of complex carboxylic polyesters found in the cell wall of plants. Degrades cutin, a macromolecule that forms the structure of the plant cuticle. This is Probable cutinase 3 from Aspergillus fumigatus (strain CBS 144.89 / FGSC A1163 / CEA10) (Neosartorya fumigata).